A 232-amino-acid chain; its full sequence is Pseudaminic acid cytidylyltransferase (232 aa).

It belongs to the CMP-NeuNAc synthase family. The cofactor is Mg(2+).

The enzyme catalyses pseudaminate + CTP = CMP-pseudaminate + diphosphate. Catalyzes the final step in the biosynthesis of pseudaminic acid, a sialic-acid-like sugar that is used to modify flagellin. Mediates the activation of pseudaminic acid with CMP by forming CMP-pseudaminic acid. The protein is Pseudaminic acid cytidylyltransferase (pseF) of Campylobacter jejuni subsp. jejuni serotype O:23/36 (strain 81-176).